Here is a 607-residue protein sequence, read N- to C-terminus: Hemagglutinin glycoprotein (607 aa).

The Intravirion segment spans residues 1–38; sequence MFSHQDKVGAFYKNNARANSSKLSLVTDEVEERRSPWF. The chain crosses the membrane as a helical; Signal-anchor for type II membrane protein span at residues 39 to 55; that stretch reads LSILLILLVGILILLTI. At 56 to 607 the chain is on the virion surface side; that stretch reads TGIRFHQVVK…IRFSCDRLDP (552 aa). N-linked (GlcNAc...) asparagine; by host glycans are attached at residues Asn149, Asn276, Asn391, Asn422, Asn456, and Asn587.

It belongs to the paramyxoviruses hemagglutinin-neuraminidase family. Non-sialidase subfamily.

The protein resides in the virion membrane. It localises to the host membrane. Attaches the virus to cell receptors and thereby initiating infection. Binding of H protein to the receptor induces a conformational change that allows the F protein to trigger virion/cell membranes fusion. The chain is Hemagglutinin glycoprotein (H) from Phocidae (true seals).